Consider the following 208-residue polypeptide: FMN-dependent NADH:quinone oxidoreductase (208 aa).

FMN is bound by residues 17–19, 99–102, and 143–146; these read SNS, MWNL, and SRGG.

It belongs to the azoreductase type 1 family. As to quaternary structure, homodimer. FMN is required as a cofactor.

The enzyme catalyses 2 a quinone + NADH + H(+) = 2 a 1,4-benzosemiquinone + NAD(+). The catalysed reaction is N,N-dimethyl-1,4-phenylenediamine + anthranilate + 2 NAD(+) = 2-(4-dimethylaminophenyl)diazenylbenzoate + 2 NADH + 2 H(+). Its function is as follows. Quinone reductase that provides resistance to thiol-specific stress caused by electrophilic quinones. In terms of biological role, also exhibits azoreductase activity. Catalyzes the reductive cleavage of the azo bond in aromatic azo compounds to the corresponding amines. The sequence is that of FMN-dependent NADH:quinone oxidoreductase from Staphylococcus aureus (strain MSSA476).